The following is a 425-amino-acid chain: Serine--tRNA ligase (425 aa).

Residue 228–230 (TAE) participates in L-serine binding. Residue 259–261 (RSE) coordinates ATP. E282 contacts L-serine. Residue 346 to 349 (EIAS) participates in ATP binding. S382 provides a ligand contact to L-serine.

The protein belongs to the class-II aminoacyl-tRNA synthetase family. Type-1 seryl-tRNA synthetase subfamily. Homodimer. The tRNA molecule binds across the dimer.

Its subcellular location is the cytoplasm. The catalysed reaction is tRNA(Ser) + L-serine + ATP = L-seryl-tRNA(Ser) + AMP + diphosphate + H(+). The enzyme catalyses tRNA(Sec) + L-serine + ATP = L-seryl-tRNA(Sec) + AMP + diphosphate + H(+). It functions in the pathway aminoacyl-tRNA biosynthesis; selenocysteinyl-tRNA(Sec) biosynthesis; L-seryl-tRNA(Sec) from L-serine and tRNA(Sec): step 1/1. Functionally, catalyzes the attachment of serine to tRNA(Ser). Is also able to aminoacylate tRNA(Sec) with serine, to form the misacylated tRNA L-seryl-tRNA(Sec), which will be further converted into selenocysteinyl-tRNA(Sec). The protein is Serine--tRNA ligase of Rickettsia massiliae (strain Mtu5).